The primary structure comprises 345 residues: S-adenosylmethionine:tRNA ribosyltransferase-isomerase (345 aa).

The protein belongs to the QueA family. In terms of assembly, monomer.

The protein localises to the cytoplasm. It catalyses the reaction 7-aminomethyl-7-carbaguanosine(34) in tRNA + S-adenosyl-L-methionine = epoxyqueuosine(34) in tRNA + adenine + L-methionine + 2 H(+). The protein operates within tRNA modification; tRNA-queuosine biosynthesis. Transfers and isomerizes the ribose moiety from AdoMet to the 7-aminomethyl group of 7-deazaguanine (preQ1-tRNA) to give epoxyqueuosine (oQ-tRNA). This chain is S-adenosylmethionine:tRNA ribosyltransferase-isomerase, found in Alkalilimnicola ehrlichii (strain ATCC BAA-1101 / DSM 17681 / MLHE-1).